The following is a 194-amino-acid chain: Putative manganese efflux pump MntP (194 aa).

A run of 6 helical transmembrane segments spans residues 3–23, 37–57, 65–85, 112–132, 137–157, and 170–190; these read PITI…AAIG, LYVA…GWLL, IAAF…IHMI, LAAT…SLAF, IGIV…FGVM, and AEIV…YEHL.

This sequence belongs to the MntP (TC 9.B.29) family.

Its subcellular location is the cell inner membrane. Probably functions as a manganese efflux pump. The polypeptide is Putative manganese efflux pump MntP (Xylella fastidiosa (strain M12)).